A 459-amino-acid chain; its full sequence is Chaperone SurA (459 aa).

The N-terminal stretch at 1–23 (MNHRLVALSVASLALLAPLTVPA) is a signal peptide. PpiC domains are found at residues 197–301 (VQQI…KVLE) and 312–411 (VTQS…QLME).

The protein resides in the periplasm. It catalyses the reaction [protein]-peptidylproline (omega=180) = [protein]-peptidylproline (omega=0). Functionally, chaperone involved in the correct folding and assembly of outer membrane proteins. Recognizes specific patterns of aromatic residues and the orientation of their side chains, which are found more frequently in integral outer membrane proteins. May act in both early periplasmic and late outer membrane-associated steps of protein maturation. The polypeptide is Chaperone SurA (Albidiferax ferrireducens (strain ATCC BAA-621 / DSM 15236 / T118) (Rhodoferax ferrireducens)).